Reading from the N-terminus, the 860-residue chain is Leucine--tRNA ligase (860 aa).

The 'HIGH' region signature appears at proline 42–histidine 52. The 'KMSKS' region motif lies at lysine 619–serine 623. ATP is bound at residue lysine 622.

Belongs to the class-I aminoacyl-tRNA synthetase family.

It is found in the cytoplasm. The catalysed reaction is tRNA(Leu) + L-leucine + ATP = L-leucyl-tRNA(Leu) + AMP + diphosphate. This is Leucine--tRNA ligase from Escherichia coli (strain K12 / MC4100 / BW2952).